Reading from the N-terminus, the 324-residue chain is Zinc finger C2HC domain-containing protein 1A (324 aa).

The segment at 15–44 (DLLPCKICGRTFFPLALKKHGPICQKTATK) adopts a C2HC/C3H-type 1 zinc-finger fold. The Zn(2+) site is built by Cys19, Cys22, His34, and Cys38. The segment at 43–83 (TKKRKTFDSSRQRAEGTDIPTVKPLKPRPEPPKKPSNWRRK) is disordered. A compositionally biased stretch (basic and acidic residues) spans 48 to 58 (TFDSSRQRAEG). The C2HC/C3H-type 2 zinc-finger motif lies at 118-147 (DYIQCPYCQRRFNENAADRHINFCKEQAAR). Residues Cys122, Cys125, His137, and Cys141 each coordinate Zn(2+). Positions 149-225 (SNKGKFSTDS…NKPQTLSPSH (77 aa)) are disordered. Positions 176–187 (SNPPGIPSSGSS) are enriched in low complexity. 2 stretches are compositionally biased toward polar residues: residues 188–198 (RLPQPSTTSKT) and 206–223 (KASSVNSPLGNKPQTLSP). Ser222 carries the post-translational modification Phosphoserine. Thr243 is modified (phosphothreonine). Ser291 is subject to Phosphoserine.

It belongs to the ZC2HC1 family. Requires Zn(2+) as cofactor.

This chain is Zinc finger C2HC domain-containing protein 1A (Zc2hc1a), found in Mus musculus (Mouse).